Consider the following 257-residue polypeptide: Galactitol 2-dehydrogenase (257 aa).

Residues 21-23, 67-68, asparagine 94, tyrosine 162, and lysine 166 each bind NAD(+); these read RAI and DV. Tyrosine 162 serves as the catalytic Proton acceptor.

This sequence belongs to the short-chain dehydrogenases/reductases (SDR) family. Homotetramer. Requires Mg(2+) as cofactor.

It carries out the reaction galactitol + NAD(+) = keto-D-tagatose + NADH + H(+). Functionally, catalyzes the oxidation of galactitol to D-tagatose. Also catalyzes the oxidation of a wide range of substrates, including polyvalent aliphatic alcohols and polyols, to the corresponding ketones and ketoses. Galactitol is the preferred substrate. This is Galactitol 2-dehydrogenase from Rhizobium johnstonii (strain DSM 114642 / LMG 32736 / 3841) (Rhizobium leguminosarum bv. viciae).